A 940-amino-acid chain; its full sequence is Coatomer subunit beta (940 aa).

HEAT repeat units follow at residues 11 to 48, 90 to 125, 126 to 162, and 310 to 347; these read FLEAPSVDALKTSLESKNDYVKISAMKTILRVVINGDS, QEMILACNSFRNDLQHPNEFIRGATLRFLCKLKEPE, LLDPLIPTVRQCLEHRHAYVRKNAILAVFSIYQVSNH, and SILEDLITDVIPFLSSSDFDVCEKAISIIMGLVSSRNV.

In terms of assembly, oligomeric complex that consists of at least the alpha, beta, beta', gamma, delta, epsilon and zeta subunits.

It localises to the cytoplasm. The protein resides in the golgi apparatus membrane. The protein localises to the cytoplasmic vesicle. It is found in the COPI-coated vesicle membrane. Functionally, the coatomer is a cytosolic protein complex that binds to dilysine motifs and reversibly associates with Golgi non-clathrin-coated vesicles, which further mediate biosynthetic protein transport from the ER, via the Golgi up to the trans Golgi network. Coatomer complex is required for budding from Golgi membranes, and is essential for the retrograde Golgi-to-ER transport of dilysine-tagged proteins. This is Coatomer subunit beta (sec26) from Schizosaccharomyces pombe (strain 972 / ATCC 24843) (Fission yeast).